Here is a 226-residue protein sequence, read N- to C-terminus: Aspartyl protease inhibitor (226 aa).

The first 15 residues, 1–15 (MKLLFLCALIALTAA), serve as a signal peptide directing secretion. Disordered stretches follow at residues 95–116 (GKKG…KKPS) and 196–218 (EAKQ…QPNV). C131 and C222 are joined by a disulfide.

This sequence belongs to the protease inhibitor I33 family.

It localises to the secreted. Functionally, aspartyl protease inhibitor. In Parelaphostrongylus tenuis (Meningeal worm), this protein is Aspartyl protease inhibitor.